The primary structure comprises 249 residues: MRIDGRKNEQIRHVKVTRHYTKYAEGSVYIEVGDTKVLCNVSIEDKVPPFMKGTGSGWITAEYNMLPRSTETRKIRDIARLKIDGRTMEIQRLIGRALRSVVDLKALGEKTLWIDCDVIQADGGTRTTAISGAFIALVDAVNKLHKIKPFKIYPIRSFVAAVSVGIVNEEKILDLCYQEDSKAKVDMNIIMTDEGSFVEVQGTGEESPYTRTELNELLDLGEKGIKQMINVQKESLKMDSLWIGTGGNN.

Residues Arg86 and Gly124–Arg126 each bind phosphate.

Belongs to the RNase PH family. As to quaternary structure, homohexameric ring arranged as a trimer of dimers.

It carries out the reaction tRNA(n+1) + phosphate = tRNA(n) + a ribonucleoside 5'-diphosphate. Phosphorolytic 3'-5' exoribonuclease that plays an important role in tRNA 3'-end maturation. Removes nucleotide residues following the 3'-CCA terminus of tRNAs; can also add nucleotides to the ends of RNA molecules by using nucleoside diphosphates as substrates, but this may not be physiologically important. Probably plays a role in initiation of 16S rRNA degradation (leading to ribosome degradation) during starvation. This Clostridium botulinum (strain Alaska E43 / Type E3) protein is Ribonuclease PH.